A 297-amino-acid chain; its full sequence is Homoserine kinase (297 aa).

An ATP-binding site is contributed by 82-92 (PVSRGLGSSAA).

It belongs to the GHMP kinase family. Homoserine kinase subfamily.

The protein resides in the cytoplasm. It carries out the reaction L-homoserine + ATP = O-phospho-L-homoserine + ADP + H(+). It functions in the pathway amino-acid biosynthesis; L-threonine biosynthesis; L-threonine from L-aspartate: step 4/5. Catalyzes the ATP-dependent phosphorylation of L-homoserine to L-homoserine phosphate. In Clostridium botulinum (strain Kyoto / Type A2), this protein is Homoserine kinase.